We begin with the raw amino-acid sequence, 369 residues long: Flagellar P-ring protein (369 aa).

A signal peptide spans 1–23 (MRIASFFTVLLTLLTLNITPASA).

This sequence belongs to the FlgI family. As to quaternary structure, the basal body constitutes a major portion of the flagellar organelle and consists of four rings (L,P,S, and M) mounted on a central rod.

Its subcellular location is the periplasm. The protein resides in the bacterial flagellum basal body. Assembles around the rod to form the L-ring and probably protects the motor/basal body from shearing forces during rotation. The polypeptide is Flagellar P-ring protein (Pectobacterium atrosepticum (strain SCRI 1043 / ATCC BAA-672) (Erwinia carotovora subsp. atroseptica)).